The primary structure comprises 386 residues: MNEPTENRLGCSRTPEPDIRLRKGHQLDGTRRGDNDSHQGDLEPILEASVLSSHHKKSSEEHEYSDEAPQEDEGFMGMSPLLQAHHAMEKMEEFVCKVWEGRWRVIPHDVLPDWLKDNDFLLHGHRPPMPSFRACFKSIFRIHTETGNIWTHLLGCVFFLCLGIFYMFRPNISFVAPLQEKVVFGLFFLGAILCLSFSWLFHTVYCHSEGVSRLFSKLDYSGIALLIMGSFVPWLYYSFYCNPQPCFIYLIVICVLGIAAIIVSQWDMFATPQYRGVRAGVFLGLGLSGIIPTLHYVISEGFLKAATIGQIGWLMLMASLYITGAALYAARIPERFFPGKCDIWFHSHQLFHIFVVAGAFVHFHGVSNLQEFRFMIGGGCSEEDAL.

A disordered region spans residues M1–E71. Topologically, residues M1–G147 are cytoplasmic. A compositionally biased stretch (basic and acidic residues) spans P15–D41. A helical membrane pass occupies residues N148–F168. Residues R169 to K181 lie on the Extracellular side of the membrane. The chain crosses the membrane as a helical span at residues V182–H202. A Zn(2+)-binding site is contributed by H202. Residues T203–R213 are Cytoplasmic-facing. A helical transmembrane segment spans residues L214 to W234. At L235–P245 the chain is on the extracellular side. A helical membrane pass occupies residues C246 to W266. The Cytoplasmic segment spans residues D267–Q273. Residues Y274–L294 form a helical membrane-spanning segment. The Extracellular portion of the chain corresponds to H295–G309. The helical transmembrane segment at Q310 to A330 threads the bilayer. Residues R331–H348 are Cytoplasmic-facing. Zn(2+)-binding residues include H348 and H352. Residues Q349 to L369 form a helical membrane-spanning segment. Residues Q370–L386 are Extracellular-facing.

This sequence belongs to the ADIPOR family. May form homooligomers and heterooligomers with ADIPOR1. Interacts with APPL2 (via BAR domain); ADIPOQ dissociates this interaction. As to expression, ubiquitous. Highly expressed in skeletal muscle, liver and placenta. Weakly expressed in brain, heart, colon, spleen, kidney, thymus, small intestine, peripheral blood leukocytes and lung.

Its subcellular location is the cell membrane. Its function is as follows. Receptor for ADIPOQ, an essential hormone secreted by adipocytes that regulates glucose and lipid metabolism. Required for normal body fat and glucose homeostasis. ADIPOQ-binding activates a signaling cascade that leads to increased PPARA activity, and ultimately to increased fatty acid oxidation and glucose uptake. Has intermediate affinity for globular and full-length adiponectin. Required for normal revascularization after chronic ischemia caused by severing of blood vessels. The chain is Adiponectin receptor protein 2 from Homo sapiens (Human).